An 84-amino-acid polypeptide reads, in one-letter code: Kappa-conotoxin-like Im11.3 (84 aa).

A signal peptide spans 1-26 (MMFRLTSVSCFLLVIACLNLFQVVLT). 4 disulfide bridges follow: Cys-29-Cys-43, Cys-36-Cys-48, Cys-42-Cys-51, and Cys-47-Cys-64. Residues 71–84 (LRPSHPLFLLLPAR) constitute a propeptide that is removed on maturation.

This sequence belongs to the conotoxin I2 superfamily. Expressed by the venom duct.

It localises to the secreted. Its function is as follows. Inhibits the vertebrate voltage-gated potassium channels Kv1.1/KCNA1 and Kv1.3/KCNA3. The sequence is that of Kappa-conotoxin-like Im11.3 from Conus imperialis (Imperial cone).